The sequence spans 507 residues: Cytochrome P450 monooxygenase ptmU (507 aa).

A helical transmembrane segment spans residues 4 to 24 (VNAWWVGGSLLLGIWAIVVFF). 3 N-linked (GlcNAc...) asparagine glycosylation sites follow: N98, N202, and N398. C444 contacts heme.

The protein belongs to the cytochrome P450 family. Requires heme as cofactor.

It localises to the membrane. The protein operates within secondary metabolite biosynthesis. Functionally, cytochrome P450 monooxygenase; part of the gene cluster that mediates the biosynthesis of the indole diterpenes penitrems. The geranylgeranyl diphosphate (GGPP) synthase ptmG catalyzes the first step in penitrem biosynthesis via conversion of farnesyl pyrophosphate and isopentyl pyrophosphate into geranylgeranyl pyrophosphate (GGPP). Condensation of indole-3-glycerol phosphate with GGPP by the prenyl transferase ptmC then forms 3-geranylgeranylindole (3-GGI). Epoxidation by the FAD-dependent monooxygenase ptmM leads to a epoxidized-GGI that is substrate of the terpene cyclase ptmB for cyclization to yield paspaline. Paspaline is subsequently converted to 13-desoxypaxilline by the cytochrome P450 monooxygenase ptmP, the latter being then converted to paxilline by the cytochrome P450 monooxygenase ptmQ. Paxilline is converted to beta-paxitriol via C-10 ketoreduction by the short-chain dehydrogenase ptmH which can be monoprenylated at the C-20 by the indole diterpene prenyltransferase ptmD. A two-step elimination (acetylation and elimination) process performed by the O-acetyltransferase ptmV and ptmI leads to the production of the prenylated form of penijanthine. The FAD-linked oxidoreductase ptmO then converts the prenylated form of penijanthine into PC-M5 which is in turn transformed into PC-M4 by the aromatic dimethylallyltransferase ptmE. Five sequential oxidative transformations performed by the cytochrome P450 monooxygenases ptmK, ptmU, ptmL, ptmN and ptmJ yield the various penitrem compounds. PtmK, ptmU and ptmM are involved in the formation of the key bicyclic ring of penitrem C via the formation of the intermediates secopenitrem D and penitrem D. PtmL catalyzes the epoxidation of penitrem D and C to yield penitrem B and F, respectively. PtmJ catalyzes the last benzylic hydroxylation to convert penitrem B to prenitrem E and penitrem F to penitrem A. This Penicillium ochrochloron protein is Cytochrome P450 monooxygenase ptmU.